Here is a 117-residue protein sequence, read N- to C-terminus: Large ribosomal subunit protein uL18 (117 aa).

It belongs to the universal ribosomal protein uL18 family. Part of the 50S ribosomal subunit; part of the 5S rRNA/L5/L18/L25 subcomplex. Contacts the 5S and 23S rRNAs.

Its function is as follows. This is one of the proteins that bind and probably mediate the attachment of the 5S RNA into the large ribosomal subunit, where it forms part of the central protuberance. The polypeptide is Large ribosomal subunit protein uL18 (Thioalkalivibrio sulfidiphilus (strain HL-EbGR7)).